Consider the following 966-residue polypeptide: Regulator of telomere elongation helicase 1 homolog (966 aa).

One can recognise a Helicase ATP-binding domain in the interval Ala-7–Asp-284. Ser-42–Thr-49 is a binding site for ATP. Positions 146, 164, 173, and 209 each coordinate [4Fe-4S] cluster. Residues Asp-233 to His-236 carry the DEAH box motif. A disordered region spans residues Val-844 to Ser-864. Polar residues predominate over residues Ser-853–Val-863. Residue Thr-855 is modified to Phosphothreonine.

This sequence belongs to the helicase family. RAD3/XPD subfamily.

The protein localises to the nucleus. It carries out the reaction ATP + H2O = ADP + phosphate + H(+). A probable ATP-dependent DNA helicase implicated in DNA repair and the maintenance of genomic stability. Acts as an anti-recombinase to counteract toxic recombination and limit crossover during meiosis. Regulates meiotic recombination and crossover homeostasis by physically dissociating strand invasion events and thereby promotes noncrossover repair by meiotic synthesis dependent strand annealing (SDSA) as well as disassembly of D loop recombination intermediates. The polypeptide is Regulator of telomere elongation helicase 1 homolog (Drosophila sechellia (Fruit fly)).